We begin with the raw amino-acid sequence, 187 residues long: UPF0301 protein PBPRA3139 (187 aa).

This sequence belongs to the UPF0301 (AlgH) family.

This Photobacterium profundum (strain SS9) protein is UPF0301 protein PBPRA3139.